A 261-amino-acid chain; its full sequence is Ethanolamine ammonia-lyase small subunit (261 aa).

3 residues coordinate adenosylcob(III)alamin: valine 158, glutamate 179, and cysteine 208.

It belongs to the EutC family. In terms of assembly, the basic unit is a heterodimer which dimerizes to form tetramers. The heterotetramers trimerize; 6 large subunits form a core ring with 6 small subunits projecting outwards. The cofactor is adenosylcob(III)alamin.

It localises to the bacterial microcompartment. The enzyme catalyses ethanolamine = acetaldehyde + NH4(+). Its pathway is amine and polyamine degradation; ethanolamine degradation. Its function is as follows. Catalyzes the deamination of various vicinal amino-alcohols to oxo compounds. Allows this organism to utilize ethanolamine as the sole source of nitrogen and carbon in the presence of external vitamin B12. The chain is Ethanolamine ammonia-lyase small subunit from Bradyrhizobium diazoefficiens (strain JCM 10833 / BCRC 13528 / IAM 13628 / NBRC 14792 / USDA 110).